A 513-amino-acid polypeptide reads, in one-letter code: Maturase K (513 aa).

The protein belongs to the intron maturase 2 family. MatK subfamily.

Its subcellular location is the plastid. The protein localises to the chloroplast. Its function is as follows. Usually encoded in the trnK tRNA gene intron. Probably assists in splicing its own and other chloroplast group II introns. This chain is Maturase K, found in Typha angustifolia (Narrow leaf cattail).